The primary structure comprises 353 residues: Protein Wnt-11b-2 (353 aa).

The N-terminal stretch at 1–22 (MALIRHCVTLLLILCCSRLCGA) is a signal peptide. Asn31, Asn38, and Asn88 each carry an N-linked (GlcNAc...) asparagine glycan. Cystine bridges form between Cys78/Cys89, Cys128/Cys136, Cys138/Cys155, Cys208/Cys222, and Cys210/Cys217. Residue Ser214 is the site of O-palmitoleoyl serine; by PORCN attachment. A sulfotyrosine mark is found at Tyr274 and Tyr281. Cystine bridges form between Cys282–Cys313, Cys298–Cys308, Cys312–Cys352, Cys328–Cys343, Cys330–Cys340, and Cys335–Cys336. A glycan (N-linked (GlcNAc...) asparagine) is linked at Asn299.

The protein belongs to the Wnt family. As to quaternary structure, homodimer. Secreted homodimers form a complex with wnt5a homodimers; tyrosine sulfation of both wnt11 and wnt5a by tpst1 is required for this interaction. Interacts with the transmembrane receptor fzd7/fz7. Interacts with lrp6 and ryk. Interacts with tdgf1/frl1. Interacts weakly with frzb1 and strongly with frzb2/crescent. Interaction with frzb2/crescent antagonizes wnt11 function in the neuroectoderm, but enhances it in mesodermal tissue. Glycosylation is required for protein secretion. Post-translationally, palmitoleoylation is required for efficient binding to frizzled receptors. Depalmitoleoylation leads to Wnt signaling pathway inhibition.

It is found in the secreted. The protein resides in the extracellular space. It localises to the extracellular matrix. Its function is as follows. Ligand for the frizzled7 transmembrane receptor. Primarily acts via non-canonical Wnt pathways mediated by either Ca(2+) and PKC, or by JNK and dvl2/dsh. Depending on the cellular context, can also signal via the canonical Wnt pathway mediated by beta-catenin and dvl2/dsh. May also inhibit canonical Wnt signaling. Maternally initiates dorsal/ventral axis formation by a canonical route, which signals via lrp6. In a complex with wnt5a, activates the canonical and non-canonical processes involved in axis formation. In the non-canonical pathway, acts through fzd7/fz7 to induce phosphorylation of dvl2/dsh. Signals through a non-canonical Wnt pathway to regulate convergent extension movements during gastrulation. Interactions with the secreted Wnt antagonist sfrp5 to coordinate foregut development, acting via a non-canonical wnt pathway whereby sfrp5 restricts wnt11b activity to prevent inappropriate foregut formation. Mediates cardiogenesis via non-canonical Wnt signaling involving JNK-activation and PKC. Acts redundantly with wnt11/wnt11r during pronephros induction. This Xenopus tropicalis (Western clawed frog) protein is Protein Wnt-11b-2.